We begin with the raw amino-acid sequence, 354 residues long: Uroporphyrinogen decarboxylase (354 aa).

Residues 27–31, D77, Y154, T209, and H327 contribute to the substrate site; that span reads RQAGR.

Belongs to the uroporphyrinogen decarboxylase family. As to quaternary structure, homodimer.

It is found in the cytoplasm. It catalyses the reaction uroporphyrinogen III + 4 H(+) = coproporphyrinogen III + 4 CO2. Its pathway is porphyrin-containing compound metabolism; protoporphyrin-IX biosynthesis; coproporphyrinogen-III from 5-aminolevulinate: step 4/4. Functionally, catalyzes the decarboxylation of four acetate groups of uroporphyrinogen-III to yield coproporphyrinogen-III. This chain is Uroporphyrinogen decarboxylase, found in Salmonella heidelberg (strain SL476).